Reading from the N-terminus, the 202-residue chain is Imidazoleglycerol-phosphate dehydratase (202 aa).

This sequence belongs to the imidazoleglycerol-phosphate dehydratase family.

The protein resides in the cytoplasm. It carries out the reaction D-erythro-1-(imidazol-4-yl)glycerol 3-phosphate = 3-(imidazol-4-yl)-2-oxopropyl phosphate + H2O. It functions in the pathway amino-acid biosynthesis; L-histidine biosynthesis; L-histidine from 5-phospho-alpha-D-ribose 1-diphosphate: step 6/9. The sequence is that of Imidazoleglycerol-phosphate dehydratase from Brucella suis (strain ATCC 23445 / NCTC 10510).